Here is a 355-residue protein sequence, read N- to C-terminus: uncharacterized protein (355 aa).

Positions 9–75 constitute a J domain; that stretch reads DYYDILNISV…KLREKYDKLG (67 aa).

The protein belongs to the DnaJ family.

It is found in the cytoplasm. This is an uncharacterized protein from Schizosaccharomyces pombe (strain 972 / ATCC 24843) (Fission yeast).